The chain runs to 520 residues: Chaperone Ric-8B (520 aa).

Residue S468 is modified to Phosphoserine. At T473 the chain carries Phosphothreonine.

It belongs to the synembryn family. As to quaternary structure, interacts with GDP-bound G(s) G-alpha proteins GNAL and GNAS. Does not interact with G-alpha proteins when they are in complex with subunits beta and gamma. As to expression, predominantly expressed in the mature olfactory sensory neurons and also in a few regions in the brain.

Its subcellular location is the cytoplasm. The protein resides in the cell cortex. In terms of biological role, chaperone that specifically binds and folds nascent G(s) G-alpha proteins (GNAS and GNAL) prior to G protein heterotrimer formation, promoting their association with the plasma membrane. Also acts as a guanine nucleotide exchange factor (GEF) for G(s) proteins by stimulating exchange of bound GDP for free GTP. Acts as an important component for odorant signal transduction by mediating GNAL (G(olf)-alpha) folding, thereby promoting-dependent cAMP accumulation in olfactory sensory neurons. The chain is Chaperone Ric-8B from Mus musculus (Mouse).